The chain runs to 493 residues: Cyclin-dependent kinase-like 2 (493 aa).

The 284-residue stretch at 4–287 folds into the Protein kinase domain; it reads YENLGLVGEG…CAELLHHDFF (284 aa). Residues 10–18 and Lys-33 each bind ATP; that span reads VGEGSYGMV. Residues 45–51 carry the [NKR]KIAxRE motif; it reads KKIAMRE. Asp-126 functions as the Proton acceptor in the catalytic mechanism. 2 disordered regions span residues 311 to 338 and 363 to 384; these read VSLS…KTLV and GEKA…SRTS. The span at 320 to 336 shows a compositional bias: basic and acidic residues; that stretch reads RKKEKEKDDSLGEERKT.

It belongs to the protein kinase superfamily. CMGC Ser/Thr protein kinase family. CDC2/CDKX subfamily.

It localises to the cytoplasm. Its subcellular location is the nucleus. The catalysed reaction is L-seryl-[protein] + ATP = O-phospho-L-seryl-[protein] + ADP + H(+). It carries out the reaction L-threonyl-[protein] + ATP = O-phospho-L-threonyl-[protein] + ADP + H(+). This Pongo abelii (Sumatran orangutan) protein is Cyclin-dependent kinase-like 2.